The following is a 298-amino-acid chain: 2-dehydro-3-deoxy-D-arabinonate dehydratase (298 aa).

Isoleucine 86 is a substrate binding site. Mg(2+) contacts are provided by glutamate 148, glutamate 150, and aspartate 169. Substrate is bound by residues lysine 187 and threonine 261.

It belongs to the FAH family. As to quaternary structure, homotetramer. Mg(2+) is required as a cofactor. Requires Ca(2+) as cofactor.

It catalyses the reaction 2-dehydro-3-deoxy-D-arabinonate = 2,5-dioxopentanoate + H2O. Participates in a pentose oxidation pathway that converts D-arabinonate to 2-oxoglutarate. The sequence is that of 2-dehydro-3-deoxy-D-arabinonate dehydratase from Saccharolobus solfataricus (strain ATCC 35092 / DSM 1617 / JCM 11322 / P2) (Sulfolobus solfataricus).